Here is a 325-residue protein sequence, read N- to C-terminus: Lipoyl synthase (325 aa).

The interval 1–32 (MPPLADASTETLSPAEQAAVRHPEKAHRPDQP) is disordered. Over residues 19 to 32 (AVRHPEKAHRPDQP) the composition is skewed to basic and acidic residues. [4Fe-4S] cluster contacts are provided by Cys-66, Cys-71, Cys-77, Cys-92, Cys-96, Cys-99, and Ser-305. Residues 78–294 (WAKKHATFMI…AEVANAKGFL (217 aa)) enclose the Radical SAM core domain.

The protein belongs to the radical SAM superfamily. Lipoyl synthase family. It depends on [4Fe-4S] cluster as a cofactor.

The protein resides in the cytoplasm. The enzyme catalyses [[Fe-S] cluster scaffold protein carrying a second [4Fe-4S](2+) cluster] + N(6)-octanoyl-L-lysyl-[protein] + 2 oxidized [2Fe-2S]-[ferredoxin] + 2 S-adenosyl-L-methionine + 4 H(+) = [[Fe-S] cluster scaffold protein] + N(6)-[(R)-dihydrolipoyl]-L-lysyl-[protein] + 4 Fe(3+) + 2 hydrogen sulfide + 2 5'-deoxyadenosine + 2 L-methionine + 2 reduced [2Fe-2S]-[ferredoxin]. The protein operates within protein modification; protein lipoylation via endogenous pathway; protein N(6)-(lipoyl)lysine from octanoyl-[acyl-carrier-protein]: step 2/2. In terms of biological role, catalyzes the radical-mediated insertion of two sulfur atoms into the C-6 and C-8 positions of the octanoyl moiety bound to the lipoyl domains of lipoate-dependent enzymes, thereby converting the octanoylated domains into lipoylated derivatives. The polypeptide is Lipoyl synthase (Beijerinckia indica subsp. indica (strain ATCC 9039 / DSM 1715 / NCIMB 8712)).